The chain runs to 575 residues: MQRVLRAAAAGIGHASGHRAPRWGAAAAAARWLSGGREAMSYDVVVVGAGPAGLAAAIRLKQLCRDADTDLSVCVLEKGSEVGAHVLSGNVFEPRALDELIPKWRQEDTPIRVPVSSDKFWLLTKNKAWTLPSPFDNKGNYVISLSQMVRWMASKAEELGVEVYPGFAASEILYDENQIVTGVATNDVGIAKDGSKRETFQPGVELRGRMTLLAEGCRGSLSEKIIRNHKLRESGQGQHQTYALGIKEVWEIEEGKHKPGSVIHTVGWPLDSKTYGGSFMYHLDDRQLAIGLVVALNYQNPFMSPYDEFQKFKQHPAVRTILDGGTVLQYGARTLNEGGFQSIPNPVFPGGAIIGCSAGFLNVPKIKGTHTAMKSGMLAAEATFKTLVEGSSMELYWENLKKSWIWEELYRARNYRPAFEYGFIPGIALSALERYVFKGKSPFTLKHGIPDHEATDMASLHSPIQYPKPDGQISFDVPTSLYRSSTNHEHDQPPHLRLRDPTVPERVNLPLYAGPESHYCPARVYEYVTDEKGDQKLHINAQNCLHCKACDIKDPKQNIEWTVPEGGGGPGYTVM.

The N-terminal 33 residues, 1-33 (MQRVLRAAAAGIGHASGHRAPRWGAAAAAARWL), are a transit peptide targeting the mitochondrion. 44 to 58 (VVVVGAGPAGLAAAI) is a binding site for FAD. The stretch at 82-103 (VGAHVLSGNVFEPRALDELIPK) is an intramembrane region. Positions 276 and 277 each coordinate a ubiquinone. The stretch at 343–363 (IPNPVFPGGAIIGCSAGFLNV) is an intramembrane region. [4Fe-4S] cluster is bound by residues Cys520, Cys544, Cys547, and Cys550. The 4Fe-4S ferredoxin-type domain maps to 535–564 (QKLHINAQNCLHCKACDIKDPKQNIEWTVP).

The protein belongs to the ETF-QO/FixC family. It depends on [4Fe-4S] cluster as a cofactor. FAD is required as a cofactor.

It is found in the mitochondrion inner membrane. It catalyses the reaction a ubiquinone + reduced [electron-transfer flavoprotein] = a ubiquinol + oxidized [electron-transfer flavoprotein] + H(+). Its function is as follows. Accepts electrons from ETF and reduces ubiquinone. The chain is Electron transfer flavoprotein-ubiquinone oxidoreductase, mitochondrial from Oryza sativa subsp. japonica (Rice).